Here is a 237-residue protein sequence, read N- to C-terminus: Endonuclease V (237 aa).

Residues Asp-46 and Asp-114 each contribute to the Mg(2+) site.

It belongs to the endonuclease V family. Mg(2+) is required as a cofactor.

It is found in the cytoplasm. The enzyme catalyses Endonucleolytic cleavage at apurinic or apyrimidinic sites to products with a 5'-phosphate.. Its function is as follows. DNA repair enzyme involved in the repair of deaminated bases. Selectively cleaves double-stranded DNA at the second phosphodiester bond 3' to a deoxyinosine leaving behind the intact lesion on the nicked DNA. This Xanthomonas axonopodis pv. citri (strain 306) protein is Endonuclease V.